Reading from the N-terminus, the 271-residue chain is MVLIKEFRVVLPCSVQEYQVGQLYSVAEASKNETGGGEGIEVLKNEPYEKDGEKGQYTHKIYHLKSKVPAFVRMIAPEGSLVFHEKAWNAYPYCRTIVTNEYMKDDFFIKIETWHKPDLGTLENVHGLDPNTWKTVEIVHIDIADRSQVEPADYKADEDPALFQSVKTKRGPLGPNWKKELANSPDCPQMCAYKLVTIKFKWWGLQSKVENFIQKQEKRIFTNFHRQLFCWIDKWIDLTMEDIRRMEDETQKELETMRKRGSVRGTSAADV.

N6-acetyllysine is present on lysine 215. A Phosphoserine modification is found at serine 262.

It belongs to the PtdIns transfer protein family. PI transfer class I subfamily. In terms of processing, constitutive phosphorylation of Ser-262 has no effect on phospholipid transfer activity but is required for Golgi targeting. In terms of tissue distribution, widely expressed in various tissues including brain.

The protein resides in the golgi apparatus. It is found in the golgi apparatus membrane. Its subcellular location is the endoplasmic reticulum membrane. It catalyses the reaction a 1,2-diacyl-sn-glycero-3-phosphocholine(in) = a 1,2-diacyl-sn-glycero-3-phosphocholine(out). The enzyme catalyses a 1,2-diacyl-sn-glycero-3-phospho-(1D-myo-inositol)(in) = a 1,2-diacyl-sn-glycero-3-phospho-(1D-myo-inositol)(out). It carries out the reaction an N-(acyl)-sphingosylphosphocholine(in) = an N-(acyl)-sphingosylphosphocholine(out). Its activity is regulated as follows. Phosphatidylinositol transfer activity is inhibited by N-ethylmaleimide. Catalyzes the transfer of phosphatidylinositol and phosphatidylcholine between membranes. Also catalyzes the transfer of sphingomyelin. Required for COPI-mediated retrograde transport from the Golgi to the endoplasmic reticulum; phosphatidylinositol and phosphatidylcholine transfer activity is essential for this function. The protein is Phosphatidylinositol transfer protein beta isoform (PITPNB) of Homo sapiens (Human).